The sequence spans 599 residues: Elongation factor 4 (599 aa).

The 183-residue stretch at 4 to 186 folds into the tr-type G domain; the sequence is ENIRNFSIIA…EIVKKIPPPE (183 aa). Residues 16 to 21 and 133 to 136 contribute to the GTP site; these read DHGKST and NKID.

The protein belongs to the TRAFAC class translation factor GTPase superfamily. Classic translation factor GTPase family. LepA subfamily.

The protein localises to the cell inner membrane. It carries out the reaction GTP + H2O = GDP + phosphate + H(+). Required for accurate and efficient protein synthesis under certain stress conditions. May act as a fidelity factor of the translation reaction, by catalyzing a one-codon backward translocation of tRNAs on improperly translocated ribosomes. Back-translocation proceeds from a post-translocation (POST) complex to a pre-translocation (PRE) complex, thus giving elongation factor G a second chance to translocate the tRNAs correctly. Binds to ribosomes in a GTP-dependent manner. This chain is Elongation factor 4, found in Geobacter metallireducens (strain ATCC 53774 / DSM 7210 / GS-15).